Consider the following 80-residue polypeptide: Exodeoxyribonuclease 7 small subunit (80 aa).

The protein belongs to the XseB family. Heterooligomer composed of large and small subunits.

The protein localises to the cytoplasm. The enzyme catalyses Exonucleolytic cleavage in either 5'- to 3'- or 3'- to 5'-direction to yield nucleoside 5'-phosphates.. Its function is as follows. Bidirectionally degrades single-stranded DNA into large acid-insoluble oligonucleotides, which are then degraded further into small acid-soluble oligonucleotides. This Escherichia coli O6:K15:H31 (strain 536 / UPEC) protein is Exodeoxyribonuclease 7 small subunit.